A 600-amino-acid polypeptide reads, in one-letter code: ATP-dependent lipid A-core flippase (600 aa).

A run of 4 helical transmembrane segments spans residues Val-26–Leu-46, Leu-82–Leu-102, Val-167–Ile-187, and Pro-266–Leu-286. Positions Leu-30–Lys-321 constitute an ABC transmembrane type-1 domain. Positions Leu-353–Met-589 constitute an ABC transporter domain. Gly-387–Ser-394 is a binding site for ATP.

The protein belongs to the ABC transporter superfamily. Lipid exporter (TC 3.A.1.106) family. As to quaternary structure, homodimer.

Its subcellular location is the cell inner membrane. It carries out the reaction ATP + H2O + lipid A-core oligosaccharideSide 1 = ADP + phosphate + lipid A-core oligosaccharideSide 2.. In terms of biological role, involved in lipopolysaccharide (LPS) biosynthesis. Translocates lipid A-core from the inner to the outer leaflet of the inner membrane. Transmembrane domains (TMD) form a pore in the inner membrane and the ATP-binding domain (NBD) is responsible for energy generation. The protein is ATP-dependent lipid A-core flippase of Pseudomonas syringae pv. tomato (strain ATCC BAA-871 / DC3000).